The sequence spans 336 residues: HTH-type transcriptional regulator SyrM (336 aa).

Residues 41 to 98 (IDLNLLVALEALLEYRNVTHAGQHIGRSQPAMSRALGRLRGLFNDDLLVRSSTGLIPT) form the HTH lysR-type domain. The H-T-H motif DNA-binding region spans 58 to 77 (VTHAGQHIGRSQPAMSRALG).

The protein belongs to the LysR transcriptional regulatory family.

In terms of biological role, acts in trans to stimulate nod gene expression via nodD3 and exo gene expression via SyrA. The protein is HTH-type transcriptional regulator SyrM (syrM) of Rhizobium etli.